We begin with the raw amino-acid sequence, 120 residues long: Small ribosomal subunit protein uS17 (120 aa).

Low complexity predominate over residues 1–22; that stretch reads MMAEAKTGAKATKSAAAGAADG. Residues 1–46 form a disordered region; it reads MMAEAKTGAKATKSAAAGAADGASKEKGPKHTPSPPKPSGRRKTRI.

The protein belongs to the universal ribosomal protein uS17 family. In terms of assembly, part of the 30S ribosomal subunit.

One of the primary rRNA binding proteins, it binds specifically to the 5'-end of 16S ribosomal RNA. The polypeptide is Small ribosomal subunit protein uS17 (Mycobacterium ulcerans (strain Agy99)).